Here is a 210-residue protein sequence, read N- to C-terminus: GTP pyrophosphokinase YwaC (210 aa).

The protein belongs to the RelA/SpoT family. As to quaternary structure, homotetramer.

The catalysed reaction is GTP + ATP = guanosine 3'-diphosphate 5'-triphosphate + AMP. The protein operates within purine metabolism; ppGpp biosynthesis; ppGpp from GTP: step 1/2. Its function is as follows. Functions as a (p)ppGpp synthase; GDP can be used instead of GTP, resulting in an increase of (p)ppGpp synthesis. Overexpression in relA mutants (triple relA-yjbM-ywaC deletions and single relA deletions) leads to growth arrest; GTP levels fall drastically, various guanine-related nucleotides are synthesized (ppGp or pGpp), the cellular transcriptional profile changes dramatically and 70S ribosome dimerization occurs. Overexpression in the presence of a wild-type relA gene does not have these effects. In eubacteria ppGpp (guanosine 3'-diphosphate 5'-diphosphate) is a mediator of the stringent response that coordinates a variety of cellular activities in response to changes in nutritional abundance. activities in response to changes in nutritional abundance. YwaC has probably a minor role in stringent response. The chain is GTP pyrophosphokinase YwaC (ywaC) from Bacillus subtilis (strain 168).